We begin with the raw amino-acid sequence, 312 residues long: Ribosomal RNA small subunit methyltransferase H (312 aa).

Residues 34–36 (GGH), D54, F81, D102, and Q109 contribute to the S-adenosyl-L-methionine site.

The protein belongs to the methyltransferase superfamily. RsmH family.

It localises to the cytoplasm. It catalyses the reaction cytidine(1402) in 16S rRNA + S-adenosyl-L-methionine = N(4)-methylcytidine(1402) in 16S rRNA + S-adenosyl-L-homocysteine + H(+). Specifically methylates the N4 position of cytidine in position 1402 (C1402) of 16S rRNA. The sequence is that of Ribosomal RNA small subunit methyltransferase H from Geotalea uraniireducens (strain Rf4) (Geobacter uraniireducens).